We begin with the raw amino-acid sequence, 287 residues long: NAD kinase (287 aa).

D70 functions as the Proton acceptor in the catalytic mechanism. NAD(+) contacts are provided by residues 70–71, 144–145, R155, K172, D174, 185–190, and Q244; these read DG, ND, and TAYSLS.

The protein belongs to the NAD kinase family. Requires a divalent metal cation as cofactor.

It is found in the cytoplasm. It carries out the reaction NAD(+) + ATP = ADP + NADP(+) + H(+). Involved in the regulation of the intracellular balance of NAD and NADP, and is a key enzyme in the biosynthesis of NADP. Catalyzes specifically the phosphorylation on 2'-hydroxyl of the adenosine moiety of NAD to yield NADP. The protein is NAD kinase of Solibacter usitatus (strain Ellin6076).